A 33-amino-acid chain; its full sequence is Cytochrome b6-f complex subunit 8 (33 aa).

Residues 2 to 22 form a helical membrane-spanning segment; the sequence is LFTLAWASLAAVFSFSIAMVV.

It belongs to the PetN family. In terms of assembly, the 4 large subunits of the cytochrome b6-f complex are cytochrome b6, subunit IV (17 kDa polypeptide, PetD), cytochrome f and the Rieske protein, while the 4 small subunits are PetG, PetL, PetM and PetN. The complex functions as a dimer.

Its subcellular location is the cellular thylakoid membrane. Component of the cytochrome b6-f complex, which mediates electron transfer between photosystem II (PSII) and photosystem I (PSI), cyclic electron flow around PSI, and state transitions. The chain is Cytochrome b6-f complex subunit 8 from Synechococcus sp. (strain WH7803).